A 589-amino-acid chain; its full sequence is Aspartate--tRNA(Asp/Asn) ligase (589 aa).

Glutamate 176 serves as a coordination point for L-aspartate. Positions 200–203 (QLFK) are aspartate. Residue arginine 222 participates in L-aspartate binding. ATP-binding positions include 222-224 (RDE) and glutamine 231. Histidine 450 is an L-aspartate binding site. Glutamate 484 contributes to the ATP binding site. L-aspartate is bound at residue arginine 491. ATP is bound at residue 536–539 (GLDR).

Belongs to the class-II aminoacyl-tRNA synthetase family. Type 1 subfamily. In terms of assembly, homodimer.

It localises to the cytoplasm. It carries out the reaction tRNA(Asx) + L-aspartate + ATP = L-aspartyl-tRNA(Asx) + AMP + diphosphate. Its function is as follows. Aspartyl-tRNA synthetase with relaxed tRNA specificity since it is able to aspartylate not only its cognate tRNA(Asp) but also tRNA(Asn). Reaction proceeds in two steps: L-aspartate is first activated by ATP to form Asp-AMP and then transferred to the acceptor end of tRNA(Asp/Asn). The chain is Aspartate--tRNA(Asp/Asn) ligase from Bacillus cytotoxicus (strain DSM 22905 / CIP 110041 / 391-98 / NVH 391-98).